A 287-amino-acid polypeptide reads, in one-letter code: Probable glucose uptake protein GlcU (287 aa).

The next 9 membrane-spanning stretches (helical) occupy residues Leu-7–Gly-29, Ile-34–Phe-56, Asn-58–Gly-75, Trp-114–Leu-136, Met-156–Val-178, Ala-183–His-202, Thr-209–Tyr-228, Val-233–Phe-255, and Thr-267–Leu-286.

This sequence belongs to the GRP transporter (TC 2.A.7.5) family.

It is found in the cell membrane. In terms of biological role, involved in the uptake of glucose. The polypeptide is Probable glucose uptake protein GlcU (glcU) (Staphylococcus aureus (strain COL)).